The primary structure comprises 196 residues: Imidazole glycerol phosphate synthase subunit HisH (196 aa).

In terms of domain architecture, Glutamine amidotransferase type-1 spans 2-196; sequence KIIIINTNCS…EQLIKNFLEI (195 aa). Catalysis depends on cysteine 77, which acts as the Nucleophile. Residues histidine 178 and glutamate 180 contribute to the active site.

In terms of assembly, heterodimer of HisH and HisF.

It localises to the cytoplasm. The catalysed reaction is 5-[(5-phospho-1-deoxy-D-ribulos-1-ylimino)methylamino]-1-(5-phospho-beta-D-ribosyl)imidazole-4-carboxamide + L-glutamine = D-erythro-1-(imidazol-4-yl)glycerol 3-phosphate + 5-amino-1-(5-phospho-beta-D-ribosyl)imidazole-4-carboxamide + L-glutamate + H(+). It carries out the reaction L-glutamine + H2O = L-glutamate + NH4(+). It participates in amino-acid biosynthesis; L-histidine biosynthesis; L-histidine from 5-phospho-alpha-D-ribose 1-diphosphate: step 5/9. IGPS catalyzes the conversion of PRFAR and glutamine to IGP, AICAR and glutamate. The HisH subunit catalyzes the hydrolysis of glutamine to glutamate and ammonia as part of the synthesis of IGP and AICAR. The resulting ammonia molecule is channeled to the active site of HisF. In Blochmanniella floridana, this protein is Imidazole glycerol phosphate synthase subunit HisH.